A 431-amino-acid polypeptide reads, in one-letter code: Acyl transferase 8 (431 aa).

His169 serves as the catalytic Proton acceptor. Disordered regions lie at residues 220-247, 260-313, and 331-400; these read VADA…RAPA, HHAG…DHLR, and GLRV…PPPT. The segment covering 224–234 has biased composition (low complexity); sequence RGGVRPGVPRP. Over residues 264–273 the composition is skewed to gly residues; the sequence is DGGGGGGGGR. Composition is skewed to basic residues over residues 297 to 306 and 335 to 380; these read ERRRRRRRGR and GRPR…RRLP. Residues 381-394 are compositionally biased toward basic and acidic residues; it reads QRHDAPRLITERAH.

The protein belongs to the plant acyltransferase family.

In terms of biological role, involved in the incorporation of ferulate into the cell wall. May act as arabinoxylan feruloyl transferase. This is Acyl transferase 8 from Oryza sativa subsp. japonica (Rice).